Consider the following 305-residue polypeptide: Tyrosine recombinase XerC (305 aa).

The 92-residue stretch at 4 to 95 (TSIQALINKW…AVKNFYRFLE (92 aa)) folds into the Core-binding (CB) domain. Positions 116–298 (LLPKALSEDD…SIKHLEAVYT (183 aa)) constitute a Tyr recombinase domain. Residues R159, K182, H250, R253, and H276 contribute to the active site. Y285 (O-(3'-phospho-DNA)-tyrosine intermediate) is an active-site residue.

This sequence belongs to the 'phage' integrase family. XerC subfamily. As to quaternary structure, forms a cyclic heterotetrameric complex composed of two molecules of XerC and two molecules of XerD.

The protein localises to the cytoplasm. Its function is as follows. Site-specific tyrosine recombinase, which acts by catalyzing the cutting and rejoining of the recombining DNA molecules. The XerC-XerD complex is essential to convert dimers of the bacterial chromosome into monomers to permit their segregation at cell division. It also contributes to the segregational stability of plasmids. In Rickettsia conorii (strain ATCC VR-613 / Malish 7), this protein is Tyrosine recombinase XerC.